The sequence spans 517 residues: GMP synthase [glutamine-hydrolyzing] (517 aa).

The 192-residue stretch at 11–202 (KIIVLDFGSQ…AFKVCGAKAN (192 aa)) folds into the Glutamine amidotransferase type-1 domain. The Nucleophile role is filled by Cys-88. Residues His-176 and Glu-178 contribute to the active site. The 190-residue stretch at 203 to 392 (WTMDDFIEMQ…LGIPHDLVWR (190 aa)) folds into the GMPS ATP-PPase domain. Residue 230–236 (SGGVDSS) participates in ATP binding.

In terms of assembly, homodimer.

It carries out the reaction XMP + L-glutamine + ATP + H2O = GMP + L-glutamate + AMP + diphosphate + 2 H(+). It participates in purine metabolism; GMP biosynthesis; GMP from XMP (L-Gln route): step 1/1. Functionally, catalyzes the synthesis of GMP from XMP. This Lactobacillus johnsonii (strain CNCM I-12250 / La1 / NCC 533) protein is GMP synthase [glutamine-hydrolyzing].